The sequence spans 453 residues: Protein LIAT1 (453 aa).

Residues Met-1–Ser-152 form a disordered region. The tract at residues Lys-82 to Lys-103 is lysine-rich domain. The span at Arg-83 to Gly-96 shows a compositional bias: basic residues. Over residues Ser-106–Ser-117 the composition is skewed to low complexity. Residues Cys-125–Pro-145 are compositionally biased toward basic and acidic residues. The interaction with ATE1 stretch occupies residues Pro-145–Tyr-197. A run of 20 repeats spans residues Ala-201–Glu-210, Ala-211–Asp-220, Ala-221–Glu-230, Ala-231–Glu-240, Ala-241–Glu-250, Ala-251–Glu-260, Ala-261–Glu-270, Ala-271–Glu-280, Ala-281–Glu-290, Ala-291–Glu-300, Ala-301–Glu-310, Ala-311–Glu-320, Ala-321–Lys-330, Ala-331–Lys-340, Ala-341–Glu-350, Ala-351–Lys-360, Ala-361–Glu-370, Ala-371–Glu-380, Ala-381–Glu-390, and Ala-391–Asn-400. The interval Ala-201–Asn-400 is 20 X 10 AA approximate tandem repeat of A-L-K-G-F-H-P-D-P-E. 2 disordered regions span residues Phe-225–His-306 and Glu-320–Leu-432. Residues Glu-320 to His-396 are compositionally biased toward basic and acidic residues.

As to quaternary structure, self-associates (via Lys-rich domain); targets LIAT1 to the nucleolus. Interacts with ATE1; it is not a substrate of ATE1, the interaction takes place in the cytoplasm and seems to increase ATE1 arginyltransferase activity. Interacts with JMJD6 and MRPS14. Post-translationally modified by JMJD6 lysyl-hydroxylase activity at its Lys-rich domain, which inhibits its self-association and nucleolar localization.

It localises to the nucleus. The protein localises to the nucleolus. The protein resides in the cytoplasm. Its function is as follows. Participates in nucleolar liquid-liquid phase separation (LLPS) through its N-terminal intrinsically disordered region (IDR). May be involved in ATE1-mediated N-terminal arginylation. This chain is Protein LIAT1, found in Homo sapiens (Human).